A 115-amino-acid chain; its full sequence is T cell receptor beta variable 7-8 (115 aa).

The signal sequence occupies residues methionine 1–alanine 21. Residues glycine 22 to leucine 115 enclose the Ig-like domain. Cysteine 42 and cysteine 111 form a disulfide bridge.

As to quaternary structure, alpha-beta TR is a heterodimer composed of an alpha and beta chain; disulfide-linked. The alpha-beta TR is associated with the transmembrane signaling CD3 coreceptor proteins to form the TR-CD3 (TcR or TCR). The assembly of alpha-beta TR heterodimers with CD3 occurs in the endoplasmic reticulum where a single alpha-beta TR heterodimer associates with one CD3D-CD3E heterodimer, one CD3G-CD3E heterodimer and one CD247 homodimer forming a stable octameric structure. CD3D-CD3E and CD3G-CD3E heterodimers preferentially associate with TR alpha and TR beta chains, respectively. The association of the CD247 homodimer is the last step of TcR assembly in the endoplasmic reticulum and is required for transport to the cell surface.

It is found in the cell membrane. In terms of biological role, v region of the variable domain of T cell receptor (TR) beta chain that participates in the antigen recognition. Alpha-beta T cell receptors are antigen specific receptors which are essential to the immune response and are present on the cell surface of T lymphocytes. Recognize peptide-major histocompatibility (MH) (pMH) complexes that are displayed by antigen presenting cells (APC), a prerequisite for efficient T cell adaptive immunity against pathogens. Binding of alpha-beta TR to pMH complex initiates TR-CD3 clustering on the cell surface and intracellular activation of LCK that phosphorylates the ITAM motifs of CD3G, CD3D, CD3E and CD247 enabling the recruitment of ZAP70. In turn ZAP70 phosphorylates LAT, which recruits numerous signaling molecules to form the LAT signalosome. The LAT signalosome propagates signal branching to three major signaling pathways, the calcium, the mitogen-activated protein kinase (MAPK) kinase and the nuclear factor NF-kappa-B (NF-kB) pathways, leading to the mobilization of transcription factors that are critical for gene expression and essential for T cell growth and differentiation. The T cell repertoire is generated in the thymus, by V-(D)-J rearrangement. This repertoire is then shaped by intrathymic selection events to generate a peripheral T cell pool of self-MH restricted, non-autoaggressive T cells. Post-thymic interaction of alpha-beta TR with the pMH complexes shapes TR structural and functional avidity. The sequence is that of T cell receptor beta variable 7-8 from Homo sapiens (Human).